The following is a 390-amino-acid chain: Pyruvate dehydrogenase E1 component subunit alpha, somatic form, mitochondrial (390 aa).

The N-terminal 29 residues, 1-29 (MRKMLAAVSRVLSGASQKPASRVLVASRN), are a transit peptide targeting the mitochondrion. Lysine 63 carries the N6-acetyllysine; alternate modification. Lysine 63 is modified (N6-succinyllysine; alternate). Histidine 92, tyrosine 118, arginine 119, alanine 157, glycine 165, valine 167, aspartate 196, glycine 197, alanine 198, asparagine 225, and tyrosine 227 together coordinate pyruvate. Tyrosine 118 and arginine 119 together coordinate thiamine diphosphate. Thiamine diphosphate contacts are provided by glycine 165, valine 167, aspartate 196, glycine 197, alanine 198, and asparagine 225. Aspartate 196 serves as a coordination point for Mg(2+). 2 residues coordinate Mg(2+): asparagine 225 and tyrosine 227. Serine 232 carries the phosphoserine; by PDK1 modification. Lysine 244 is subject to N6-acetyllysine; alternate. The residue at position 244 (lysine 244) is an N6-succinyllysine; alternate. Lysine 277 is subject to N6-succinyllysine. Position 292 (histidine 292) interacts with thiamine diphosphate. Serine 293 carries the post-translational modification Phosphoserine; by PDK1, PDK2, PDK3 and PDK4. Serine 295 is modified (phosphoserine). Serine 300 carries the phosphoserine; by PDK1, PDK2, PDK3 and PDK4 modification. Phosphotyrosine is present on tyrosine 301. Lysine 313 is modified (N6-acetyllysine; alternate). Lysine 313 is subject to N6-succinyllysine; alternate. Residues lysine 321 and lysine 336 each carry the N6-acetyllysine modification. The residue at position 385 (lysine 385) is an N6-succinyllysine.

Heterotetramer of two PDHA1 and two PDHB subunits. The heterotetramer interacts with DLAT, and is part of the multimeric pyruvate dehydrogenase complex that contains multiple copies of pyruvate dehydrogenase (E1), dihydrolipoamide acetyltransferase (DLAT, E2) and lipoamide dehydrogenase (DLD, E3). These subunits are bound to an inner core composed of about 48 DLAT and 12 PDHX molecules. It depends on thiamine diphosphate as a cofactor. Mg(2+) serves as cofactor. In terms of processing, phosphorylation at Ser-232, Ser-293 and Ser-300 by PDK family kinases inactivates the enzyme; for this phosphorylation at a single site is sufficient. Dephosphorylation at all three sites, i.e. at Ser-232, Ser-293 and Ser-300, is required for reactivation. Post-translationally, acetylation alters the phosphorylation pattern. Deacetylated by SIRT3. Ubiquitous.

It localises to the mitochondrion matrix. It carries out the reaction N(6)-[(R)-lipoyl]-L-lysyl-[protein] + pyruvate + H(+) = N(6)-[(R)-S(8)-acetyldihydrolipoyl]-L-lysyl-[protein] + CO2. With respect to regulation, pyruvate dehydrogenase activity is inhibited by phosphorylation of PDHA1; it is reactivated by dephosphorylation. Its function is as follows. The pyruvate dehydrogenase complex catalyzes the overall conversion of pyruvate to acetyl-CoA and CO(2), and thereby links the glycolytic pathway to the tricarboxylic cycle. The sequence is that of Pyruvate dehydrogenase E1 component subunit alpha, somatic form, mitochondrial (PDHA1) from Homo sapiens (Human).